Here is a 107-residue protein sequence, read N- to C-terminus: UPF0060 membrane protein Atu1058 (107 aa).

Transmembrane regions (helical) follow at residues 5–25, 32–52, 59–79, and 85–105; these read LIYV…WAWL, WILL…TLVA, AYAA…WGVE, and RWDI…LFGP.

It belongs to the UPF0060 family.

It localises to the cell inner membrane. This is UPF0060 membrane protein Atu1058 from Agrobacterium fabrum (strain C58 / ATCC 33970) (Agrobacterium tumefaciens (strain C58)).